The chain runs to 195 residues: Probable GTP-binding protein EngB (195 aa).

Residues 24–195 (ELPEIALAGR…EAWDAILEKL (172 aa)) enclose the EngB-type G domain. Residues 32 to 39 (GRSNVGKS), 59 to 63 (GKTQL), 77 to 80 (DVPG), 144 to 147 (TKAD), and 176 to 178 (FSS) each bind GTP. Mg(2+)-binding residues include Ser-39 and Thr-61.

It belongs to the TRAFAC class TrmE-Era-EngA-EngB-Septin-like GTPase superfamily. EngB GTPase family. The cofactor is Mg(2+).

Necessary for normal cell division and for the maintenance of normal septation. This chain is Probable GTP-binding protein EngB, found in Streptococcus pneumoniae (strain P1031).